Reading from the N-terminus, the 206-residue chain is Transcriptional regulator GfcR (206 aa).

Belongs to the purine/pyrimidine phosphoribosyltransferase family. GfcR subfamily.

The sequence is that of Transcriptional regulator GfcR from Methanosphaerula palustris (strain ATCC BAA-1556 / DSM 19958 / E1-9c).